Consider the following 201-residue polypeptide: 3-isopropylmalate dehydratase small subunit (201 aa).

Belongs to the LeuD family. LeuD type 1 subfamily. In terms of assembly, heterodimer of LeuC and LeuD.

It carries out the reaction (2R,3S)-3-isopropylmalate = (2S)-2-isopropylmalate. It participates in amino-acid biosynthesis; L-leucine biosynthesis; L-leucine from 3-methyl-2-oxobutanoate: step 2/4. Catalyzes the isomerization between 2-isopropylmalate and 3-isopropylmalate, via the formation of 2-isopropylmaleate. The sequence is that of 3-isopropylmalate dehydratase small subunit from Paramagnetospirillum magneticum (strain ATCC 700264 / AMB-1) (Magnetospirillum magneticum).